A 727-amino-acid chain; its full sequence is Long-chain-fatty-acid--[acyl-carrier-protein] ligase AEE15, chloroplastic (727 aa).

The N-terminal 66 residues, 1 to 66, are a transit peptide targeting the chloroplast; sequence MQIRLKPDYS…PSFRRFRVHC (66 aa).

This sequence belongs to the ATP-dependent AMP-binding enzyme family.

It is found in the plastid. The protein resides in the chloroplast. The catalysed reaction is a long-chain fatty acid + holo-[ACP] + ATP = a long-chain fatty acyl-[ACP] + AMP + diphosphate. Functionally, probably involved in the activation of fatty acids to acyl-carrier-protein prior to fatty acid elongation in plastids. Acts on medium- to long-chain fatty acids. This is Long-chain-fatty-acid--[acyl-carrier-protein] ligase AEE15, chloroplastic (AAE15) from Arabidopsis thaliana (Mouse-ear cress).